The chain runs to 169 residues: Nucleoside diphosphate kinase 3 (169 aa).

The ADP site is built by K29, R105, T111, R122, V129, and N132. H135 serves as the catalytic Pros-phosphohistidine intermediate.

This sequence belongs to the NDK family. As to quaternary structure, homohexamer. Interacts (via its N-terminal region) with KAT5; this interaction enables recruitment of NME3 at DNA damage sites where it plays a role in the repair of DNA. Found in association with several ciliary nephronophthisis proteins, including NEK8, CEP164, ANKS6. The cofactor is Mg(2+).

The protein resides in the mitochondrion outer membrane. It localises to the cytoplasm. Its subcellular location is the cytoskeleton. The protein localises to the cilium basal body. The catalysed reaction is a 2'-deoxyribonucleoside 5'-diphosphate + ATP = a 2'-deoxyribonucleoside 5'-triphosphate + ADP. The enzyme catalyses a ribonucleoside 5'-diphosphate + ATP = a ribonucleoside 5'-triphosphate + ADP. Its function is as follows. Catalyzes the phosphorylation of ribonucleosides and deoxyribonucleoside diphosphates, other than ATP, into the corresponding triphosphates with ATP as the major phosphate donor. The ATP gamma phosphate is transferred to the nucleoside diphosphate beta phosphate via a ping-pong mechanism, using a phosphorylated active-site intermediate. Through the catalyzed exchange of gamma-phosphate between di- and triphosphonucleosides participates in regulation of intracellular nucleotide homeostasis. Inhibits granulocyte differentiation. May be required for ciliary function during renal development. Functionally, independently of its kinase activity, facilitates mitochondrial tethering prior to membrane fusion through its direct membrane-binding and hexamerization. Implicated in repair of both single- and double-stranded breaks in DNA through its association with the ribonucleotide reductase complex (RNR complex) via its interaction with the histone acetyltransferase KAT5, this interaction enables recruitment of NME3 at DNA damage sites where it plays a role in the repair of DNA, independently of its kinase activity. In Mus musculus (Mouse), this protein is Nucleoside diphosphate kinase 3 (Nme3).